The chain runs to 447 residues: MGKEKIHISIVVIGHVDSGKSTTTGHLIYKLGGIDKRVIERFEKEAAEMNKRSFKYAWVLDKLKAERERGITIDIALWKFETTKYYCTVIDAPGHRDFIKNMITGTSQADCAVLIIDSTTGGFEAGISKDGQTREHALLAFTLGVKQMICCCNKMDATTPKYSKSRFEEIVKEVSSYLKKVGYNPDKIAFIPISGFEGDNMIDRSTNLDWYKGPTLLEALDQISEPKRPSDKPLRLPLQDVYKIGGIGTVPVGRVETGVIKPGMVVTFGPSGLTTEVKSVEMHHEALQEALPGDNVGFNVKNVAVKDLKRGYVASNSKDDPAKEAANFTAQVIIMNHPGQIGNGYAPVLDCHTSHIAVKFAEIQTKIDRRSGKELEKEPKFLKNGDAGFVKMIPTKPMVVETFMSYPPLGRFAVRDMRQTVAVGVIKSVEKKDPTGAKVTKAAIKKK.

Residues 5–230 (KIHISIVVIG…DQISEPKRPS (226 aa)) form the tr-type G domain. Residues 14-21 (GHVDSGKS) are G1. 14 to 21 (GHVDSGKS) is a GTP binding site. Position 55 is an N6,N6-dimethyllysine (Lys-55). The G2 stretch occupies residues 70-74 (GITID). Lys-79 carries the post-translational modification N6,N6,N6-trimethyllysine. The interval 91–94 (DAPG) is G3. Residues 91-95 (DAPGH) and 153-156 (NKMD) contribute to the GTP site. Residues 153–156 (NKMD) are G4. Lys-187 carries the N6,N6,N6-trimethyllysine modification. Residues 194-196 (SGF) are G5. N6-methyllysine is present on Lys-261. Glu-289 carries the post-translational modification 5-glutamyl glycerylphosphorylethanolamine. Lys-306 is subject to N6,N6,N6-trimethyllysine. Glu-362 carries the post-translational modification 5-glutamyl glycerylphosphorylethanolamine. Position 396 is an N6,N6,N6-trimethyllysine (Lys-396).

It belongs to the TRAFAC class translation factor GTPase superfamily. Classic translation factor GTPase family. EF-Tu/EF-1A subfamily.

Its subcellular location is the cytoplasm. Functionally, this protein promotes the GTP-dependent binding of aminoacyl-tRNA to the A-site of ribosomes during protein biosynthesis. The sequence is that of Elongation factor 1-alpha from Daucus carota (Wild carrot).